Here is a 619-residue protein sequence, read N- to C-terminus: MALLQIAEPGQAAAPHQHRLAVGIDLGTTNSLVASVRSGQSVILNDEQERSLVPSVVHYGVEEKKVGLEAFEQASLDPKNTVISVKRLIGRSLSDVQSRYSSLPYEFVASENGLPLIITAQGSKSPIEVSSDILSRLNHIAEQRLGGELSGVVITVPAYFDDAQRQSTKDAARLAGLNVLRLLNEPTAAALAYGLDSGQEGIIAVYDLGGGTFDISILRLSKGIFEVLATGGDTALGGDDFDHLIADWIIEQTKLKPQTANQQRELITLANQAKITLTNEKSAVISWQDFSVEISREQFNELIYPLVKRSLLTCRRALKDANVESEEVQAVVMVGGSTRVPYVREQVGEFFGKTPLTSIDPDKVVALGAAIQADILVGNKTDSDMLLLDVVPLSLGIETMGGLVEKIIPRNTTIPVARAQEFTTFKDGQTAMTVHVLQGERELVDDCRSLGRFTLRGIPPMAAGAAHIRVTYQVDADGLLSVTAMEKSTKVQSSIQIKPSYGLTDEEVTAMIKSSFDNAQEDLQARELAEQRVEADRVIESVIVALQADGAELLSTDEFHHIETVLKQLMDVKLGSDRDAIAQGIKALDTATQEFAARRMNASINKALTGKNLSDIENP.

The protein belongs to the heat shock protein 70 family.

Chaperone involved in the maturation of iron-sulfur cluster-containing proteins. Has a low intrinsic ATPase activity which is markedly stimulated by HscB. This is Chaperone protein HscA homolog from Haemophilus influenzae (strain PittGG).